Consider the following 236-residue polypeptide: Peroxisomal membrane protein 11D (236 aa).

The residue at position 2 (Gly-2) is an N-acetylglycine. At Gly-2 to Lys-92 the chain is on the cytoplasmic side. A helical membrane pass occupies residues Asn-93–Gly-109. Residues Arg-110–Thr-207 are Lumenal-facing. Residues Pro-208–Leu-227 traverse the membrane as a helical segment. At Pro-228–Pro-236 the chain is on the cytoplasmic side.

It belongs to the peroxin-11 family. As to quaternary structure, homooligomer. Interacts with ARC5 and FIS1B on peroxisomes. In terms of tissue distribution, expressed in developing siliques.

It localises to the peroxisome membrane. Functionally, involved in peroxisomal proliferation. Promotes peroxisomal duplication, aggregation or elongation without fission. The chain is Peroxisomal membrane protein 11D (PEX11D) from Arabidopsis thaliana (Mouse-ear cress).